The sequence spans 342 residues: MSVHPTQTLSLSQYLIEEQLKLPQATGDFTALMSHLVYAAKIVSREVRKAGLLENVLGSNETVNVQGETQMKLDEYADKVFNHTLTRSGHLCILGSEEHEETVSVPSGYKIGKYTIAIDPLDGSSNIDANVSIGTIFSVHLRKSPADTPGTLSDLLQKGSGQRAAGYVLYGSSTMLVLCTGKGVSGFTLDPSCGEFILSHPDMQMPETGGIYSINEGNYNYWSDEVKNYIRDIKSIEGGKKPQSGRYIGSLVADFHRNLLKGGIFLYPNDTKSTKYPNGKLRLLYEAAPMAFIAEQAGGMAVTVYGERILDLTPKELHERTTLVVGSKKEVEHFLKFAPKKP.

Glu97, Asp119, Leu121, and Asp122 together coordinate Mg(2+). Substrate-binding positions include 122–125 (DGSS), Asn215, Tyr247, and Lys280. Mg(2+) is bound at residue Glu286.

The protein belongs to the FBPase class 1 family. Homotetramer. Mg(2+) is required as a cofactor.

The protein resides in the cytoplasm. It catalyses the reaction beta-D-fructose 1,6-bisphosphate + H2O = beta-D-fructose 6-phosphate + phosphate. It functions in the pathway carbohydrate biosynthesis; gluconeogenesis. The chain is Fructose-1,6-bisphosphatase class 1 from Leptospira borgpetersenii serovar Hardjo-bovis (strain JB197).